Here is a 471-residue protein sequence, read N- to C-terminus: Coagulation factor IX (471 aa).

The N-terminal stretch at 1–28 (MKHLNTVMAESPALITIFLLGYLLSTEC) is a signal peptide. The propeptide occupies 29 to 46 (AVFLDRENATKILTRPKR). Ca(2+) contacts are provided by Tyr47, Asn48, Glu53, Glu54, Glu61, Glu63, Glu66, Glu67, Glu72, Glu73, and Glu76. Residues 47-92 (YNSGKLEEFVRGNLERECIEERCSFEEAREVFENTEKTTEFWKQYV) form the Gla domain. A 4-carboxyglutamate mark is found at Glu53, Glu54, Glu61, Glu63, Glu66, Glu67, Glu72, Glu73, Glu76, Glu79, and Glu82. Glu61 contacts Mg(2+). Cysteines 64 and 69 form a disulfide. Position 66 (Glu66) interacts with Mg(2+). Glu72 contacts Mg(2+). Glu76 provides a ligand contact to Mg(2+). Glu82 provides a ligand contact to Ca(2+). A Mg(2+)-binding site is contributed by Glu82. Residue Thr85 is glycosylated (O-linked (GalNAc...) threonine). Positions 86, 93, 94, and 96 each coordinate Ca(2+). Residue Glu86 is modified to 4-carboxyglutamate. A Mg(2+)-binding site is contributed by Glu86. Residues 93–129 (DGDQCESNPCLNGGICKDDISSYECWCQVGFEGRNCE) form the EGF-like 1; calcium-binding domain. Cystine bridges form between Cys97-Cys108, Cys102-Cys117, Cys119-Cys128, Cys134-Cys145, Cys141-Cys155, Cys157-Cys170, Cys178-Cys345, Cys262-Cys278, Cys392-Cys406, and Cys417-Cys445. O-linked (Glc...) serine glycosylation occurs at Ser99. Residues Asp110 and Asp111 each coordinate Ca(2+). At Asp110 the chain carries (3R)-3-hydroxyaspartate. Position 114 is a phosphoserine (Ser114). The 42-residue stretch at 130-171 (LDATCNIKNGRCKQFCKNSPDNKVICSCTEGYQLAEDQKSCE) folds into the EGF-like 2 domain. The propeptide at 193 to 236 (AETVFSNMDYENSTEAVFIQDDITDGAILNNVTESSESLNDFTR) is activation peptide. Tyr202 is modified (sulfotyrosine). N-linked (GlcNAc...) asparagine glycosylation occurs at Asn204. The residue at position 205 (Ser205) is a Phosphoserine. A Phosphothreonine; alternate modification is found at Thr206. A glycan (O-linked (GalNAc...) threonine; alternate) is linked at Thr206. N-linked (GlcNAc...) asparagine glycosylation is present at Asn223. Thr225 and Thr235 each carry an O-linked (GalNAc...) threonine glycan. One can recognise a Peptidase S1 domain in the interval 237–469 (VVGGENAKPG…YVNWIKEKTK (233 aa)). The Charge relay system role is filled by His277. 4 residues coordinate Ca(2+): Glu291, Asn293, Glu298, and Glu301. The active-site Charge relay system is Asp325. The active-site Charge relay system is Ser421.

The protein belongs to the peptidase S1 family. As to quaternary structure, heterodimer of a light chain and a heavy chain; disulfide-linked. Interacts (inactive and activated) with F11 (activated) in calcium-dependent manner. Interacts with SERPINC1. In terms of processing, activated by factor XIa, which excises the activation peptide. The propeptide can also be removed by snake venom protease. Activated by coagulation factor VIIa-tissue factor (F7-F3) complex in calcium-dependent manner. The iron and 2-oxoglutarate dependent 3-hydroxylation of aspartate and asparagine is (R) stereospecific within EGF domains. Post-translationally, predominantly O-glucosylated at Ser-99 by POGLUT1 in vitro. Detected in liver.

The protein resides in the secreted. The catalysed reaction is Selective cleavage of Arg-|-Ile bond in factor X to form factor Xa.. In terms of biological role, factor IX is a vitamin K-dependent plasma protein that participates in the intrinsic pathway of blood coagulation by converting factor X to its active form in the presence of Ca(2+) ions, phospholipids, and factor VIIIa. The sequence is that of Coagulation factor IX (F9) from Mus musculus (Mouse).